A 125-amino-acid chain; its full sequence is Large ribosomal subunit protein eL8 (125 aa).

The protein belongs to the eukaryotic ribosomal protein eL8 family. In terms of assembly, part of the 50S ribosomal subunit. Probably part of the RNase P complex.

The protein localises to the cytoplasm. Multifunctional RNA-binding protein that recognizes the K-turn motif in ribosomal RNA, the RNA component of RNase P, box H/ACA, box C/D and box C'/D' sRNAs. The sequence is that of Large ribosomal subunit protein eL8 from Nanoarchaeum equitans (strain Kin4-M).